The primary structure comprises 64 residues: Toxin BmCa-1 (64 aa).

The signal sequence occupies residues 1 to 18 (MNTFVVVFLLLTAILCHA). A propeptide spanning residues 19–27 (EHALDETAR) is cleaved from the precursor. 3 cysteine pairs are disulfide-bonded: cysteine 29–cysteine 43, cysteine 36–cysteine 49, and cysteine 42–cysteine 58.

It belongs to the scorpion calcin-like family. As to expression, expressed by the venom gland.

Its subcellular location is the secreted. In terms of biological role, may increase intracellular calcium release through the activation of nuclear inositol 1,4,5-trisphosphate receptors (ITPR) of cardiomyocytes, thereby causing an increase in the contraction frequency of these cells. The protein is Toxin BmCa-1 of Olivierus martensii (Manchurian scorpion).